Reading from the N-terminus, the 980-residue chain is Vacuolar protein sorting-associated protein 11 homolog (980 aa).

One copy of the CHCR repeat lies at 407-554 (YKETIGMLEP…GRDLLIHARD (148 aa)). An RING-type; atypical zinc finger spans residues 803–843 (CSACDTPLQLPTVHFLCKHAYHVHCFESYNMDGSDKCPACQ). The segment covering 886 to 898 (TKKTKKSEAKKDP) has biased composition (basic and acidic residues). The tract at residues 886–980 (TKKTKKSEAK…APAPSTNPFD (95 aa)) is disordered. 2 stretches are compositionally biased toward polar residues: residues 917 to 937 (TTISRTMSTVSSNMATPSRQR) and 947 to 960 (TNPFFNSDSGTRLS).

Belongs to the VPS11 family. Probable core component of at least two putative endosomal tethering complexes, the homotypic fusion and vacuole protein sorting (HOPS) complex and the class C core vacuole/endosome tethering (CORVET) complex. Their common core is composed of the class C Vps proteins vps-11, vps-16 and vps-18, which in HOPS further associates with vps-33.1, vps-39 and vps-41 and in CORVET with vps-8 and vps-33.2.

The protein resides in the late endosome membrane. Its subcellular location is the lysosome membrane. Its function is as follows. Plays a role in vesicle-mediated protein trafficking to lysosomal compartments including the endocytic membrane transport pathways. Believed to act as a core component of the putative HOPS and CORVET endosomal tethering complexes which are proposed to be involved in the rab-5-to-rab-7 endosome conversion probably implicating sand-1, and via binding SNAREs and SNARE complexes to mediate tethering and docking events during SNARE-mediated membrane fusion. The HOPS complex is proposed to be recruited to Rab7 on the late endosomal membrane and to regulate late endocytic, phagocytic and autophagic traffic towards lysosomes. Within the HOPS complex, contributes to the normal development of gut granules in embryonic and adult intestinal cells. The CORVET complex is proposed to function as a Rab5 effector to mediate early endosome fusion probably in specific endosome subpopulations. Required for fusion of endosomes and autophagosomes with lysosomes. Involved in cargo transport from early to late endosomes and required for the transition from early to late endosomes. Possibly has a role in clearance of apoptotic cells during programmed cell death. The sequence is that of Vacuolar protein sorting-associated protein 11 homolog from Caenorhabditis elegans.